A 224-amino-acid polypeptide reads, in one-letter code: Ribonuclease T (224 aa).

Acidic residues predominate over residues 1–11; the sequence is MSEDLYEDDLD. The interval 1 to 22 is disordered; that stretch reads MSEDLYEDDLDTQGSSGPRHPM. The Exonuclease domain maps to 32–206; it reads VVVDVETGGF…YDTEKTAELF (175 aa). 4 residues coordinate Mg(2+): Asp35, Glu37, His193, and Asp198. His193 (proton donor/acceptor) is an active-site residue.

This sequence belongs to the RNase T family. As to quaternary structure, homodimer. The cofactor is Mg(2+).

Functionally, trims short 3' overhangs of a variety of RNA species, leaving a one or two nucleotide 3' overhang. Responsible for the end-turnover of tRNA: specifically removes the terminal AMP residue from uncharged tRNA (tRNA-C-C-A). Also appears to be involved in tRNA biosynthesis. The chain is Ribonuclease T from Pseudomonas putida (strain ATCC 700007 / DSM 6899 / JCM 31910 / BCRC 17059 / LMG 24140 / F1).